A 318-amino-acid chain; its full sequence is MDATHMSEEAQPTAGPPKNLVSGLIKAVRPRQWIKNLLVLAAPLAAVGSGIEYDYADVAAKVSVAFVVFCLAASSIYLINDARDVEADRAHPTKRFRPIAAGVVPEWMAYSLAGLLAVASLVISWWLTANLAIVMAVYIAVQLAYCFGLKHQAVLDICIVSSGFLIRAIAGGVAADIPLSQWFLLVMAFGSLFMAAGKRYAELQLAERTGAKIRKSLESYTSSYLRFVWTLSATAMVVCYGLWAFSRDRANDLMTLDAQDASWYAVTMIPFTIAILRYAVDIDGGIAGEPEEIALKDRVLQILFLAWIGTIGAAIYFS.

The next 2 membrane-spanning stretches (helical) occupy residues 33–53 (WIKNLLVLAAPLAAVGSGIEY) and 59–79 (AAKVSVAFVVFCLAASSIYLI). 5-phospho-alpha-D-ribose 1-diphosphate is bound by residues K35 and Y77. Mg(2+) contacts are provided by N80 and D84. 5-phospho-alpha-D-ribose 1-diphosphate is bound at residue K94. The next 2 membrane-spanning stretches (helical) occupy residues 99–119 (IAAGVVPEWMAYSLAGLLAVA) and 121–141 (LVISWWLTANLAIVMAVYIAV). 5-phospho-alpha-D-ribose 1-diphosphate is bound by residues K150 and R167. 2 helical membrane passes run 153–173 (AVLDICIVSSGFLIRAIAGGV) and 177–197 (IPLSQWFLLVMAFGSLFMAAG). Trans,octa-cis-decaprenyl phosphate is bound at residue K198. A run of 3 helical transmembrane segments spans residues 225-245 (LRFVWTLSATAMVVCYGLWAF), 262-282 (SWYAVTMIPFTIAILRYAVDI), and 298-318 (RVLQILFLAWIGTIGAAIYFS).

This sequence belongs to the UbiA prenyltransferase family. DPPR synthase subfamily. Mg(2+) serves as cofactor.

It localises to the cell inner membrane. It catalyses the reaction trans,octa-cis-decaprenyl phosphate + 5-phospho-alpha-D-ribose 1-diphosphate + H(+) = trans,octa-cis-decaprenylphospho-beta-D-ribofuranose 5-phosphate + diphosphate. It functions in the pathway cell wall biogenesis; cell wall polysaccharide biosynthesis. Involved in the biosynthesis of decaprenylphosphoryl arabinose (DPA) a precursor for arabinan synthesis in mycobacterial cell wall biosynthesis. Catalyzes the transfer of a 5-phosphoribosyl residue from phosphoribose diphosphate (PRPP) to decaprenyl phosphate (DP) to form decaprenylphosphoryl-5-phosphoribose (DPPR). This is Decaprenyl-phosphate phosphoribosyltransferase from Mycolicibacterium smegmatis (strain ATCC 700084 / mc(2)155) (Mycobacterium smegmatis).